The sequence spans 457 residues: Argininosuccinate lyase (457 aa).

The protein belongs to the lyase 1 family. Argininosuccinate lyase subfamily.

It is found in the cytoplasm. It catalyses the reaction 2-(N(omega)-L-arginino)succinate = fumarate + L-arginine. Its pathway is amino-acid biosynthesis; L-arginine biosynthesis; L-arginine from L-ornithine and carbamoyl phosphate: step 3/3. This is Argininosuccinate lyase from Klebsiella pneumoniae subsp. pneumoniae (strain ATCC 700721 / MGH 78578).